A 300-amino-acid chain; its full sequence is Cation-efflux pump FieF (300 aa).

4 helical membrane passes run 12-32 (AAIAATAMASLLLLIKIFAWW), 39-59 (ILAALVDSLVDIGASLTNLLV), 82-102 (AALAQSMFISGSALFLFLTGI), and 114-134 (PGVGVIVTIVALICTIILVSF). Positions 45 and 49 each coordinate Zn(2+). Zn(2+)-binding residues include histidine 153 and aspartate 157. The next 2 membrane-spanning stretches (helical) occupy residues 156-176 (SDVMMNGAILLALGLSWYGWH) and 178-198 (ADALFALGIGIYILYSALRMG).

The protein belongs to the cation diffusion facilitator (CDF) transporter (TC 2.A.4) family. FieF subfamily. As to quaternary structure, homodimer.

It localises to the cell inner membrane. It catalyses the reaction Zn(2+)(in) + H(+)(out) = Zn(2+)(out) + H(+)(in). The catalysed reaction is Cd(2+)(in) + H(+)(out) = Cd(2+)(out) + H(+)(in). It carries out the reaction Fe(2+)(in) + H(+)(out) = Fe(2+)(out) + H(+)(in). Its function is as follows. Divalent metal cation transporter which exports Zn(2+), Cd(2+) and possibly Fe(2+). May be involved in zinc and iron detoxification by efflux. This Escherichia coli O127:H6 (strain E2348/69 / EPEC) protein is Cation-efflux pump FieF.